Reading from the N-terminus, the 549-residue chain is MFCVQCEQTIRTPAGNGCAYAQGMCGKTAETSDLQDVLIYTLQGLSAWALAAREHGIVDSEIDAFVPKAFFATLTNVNFDSARIVAYVNQALTYRQQLAAKLAPLAVQADTLPAAARFEPGADLLAQLAQAPQTAVNRGKNEVNEDIMGLRLLCLYGLKGAAAYMEHARVLDQQDAGVAAEFHRIMSWLGTDPSDLDPLFKCAMDIGLLNFKIMEMLDLGETTAFGHPEPTQVRVTPVPGKCILVSGHDMVDLKLILEQTKGTGINIYTHGEMLPALAYPFFKQYPHLVGNYGSAWQNQQKEFANFPGAVVMTSNCIIDPNVGNYSDRIFTRSIVGWPGVTHLEGEDFSAVIAKAQALEGFKHVELEHFITIGFARNALMQAAPAVIDKVKAGEISHFFLVGGCDGDRAERAYYTEFAKAIPQDSLLLTLGCGKYKFNKLDFGDIGGIPRLLDVGQCNDAYSAIQLALALSEAFECGVNDLPLTLVLSWFEQKAIVILLTLLALGVKDIRTGPTAPAFLTPALLKVLEEQFGLKGTTTAEADLAEILAA.

Positions 3, 6, 18, and 25 each coordinate [2Fe-2S] cluster. Positions 248, 272, 316, 404, 432, 457, 491, and 493 each coordinate hybrid [4Fe-2O-2S] cluster. A Cysteine persulfide modification is found at C404.

It belongs to the HCP family. Requires [2Fe-2S] cluster as cofactor. Hybrid [4Fe-2O-2S] cluster serves as cofactor.

The protein localises to the cytoplasm. The catalysed reaction is A + NH4(+) + H2O = hydroxylamine + AH2 + H(+). In terms of biological role, catalyzes the reduction of hydroxylamine to form NH(3) and H(2)O. This chain is Hydroxylamine reductase, found in Aeromonas hydrophila subsp. hydrophila (strain ATCC 7966 / DSM 30187 / BCRC 13018 / CCUG 14551 / JCM 1027 / KCTC 2358 / NCIMB 9240 / NCTC 8049).